Here is a 467-residue protein sequence, read N- to C-terminus: Mitochondrial distribution and morphology protein 10 (467 aa).

The protein belongs to the MDM10 family. In terms of assembly, component of the ER-mitochondria encounter structure (ERMES) or MDM complex, composed of MMM1, MDM10, MDM12 and MDM34. Associates with the mitochondrial outer membrane sorting assembly machinery SAM(core) complex.

Its subcellular location is the mitochondrion outer membrane. In terms of biological role, component of the ERMES/MDM complex, which serves as a molecular tether to connect the endoplasmic reticulum and mitochondria. Components of this complex are involved in the control of mitochondrial shape and protein biogenesis and may function in phospholipid exchange. MDM10 is involved in the late assembly steps of the general translocase of the mitochondrial outer membrane (TOM complex). Functions in the TOM40-specific route of the assembly of outer membrane beta-barrel proteins, including the association of TOM40 with the receptor TOM22 and small TOM proteins. Can associate with the SAM(core) complex as well as the MDM12-MMM1 complex, both involved in late steps of the major beta-barrel assembly pathway, that is responsible for biogenesis of all outer membrane beta-barrel proteins. May act as a switch that shuttles between both complexes and channels precursor proteins into the TOM40-specific pathway. Plays a role in mitochondrial morphology and in the inheritance of mitochondria. The sequence is that of Mitochondrial distribution and morphology protein 10 from Ajellomyces capsulatus (strain G186AR / H82 / ATCC MYA-2454 / RMSCC 2432) (Darling's disease fungus).